Here is a 209-residue protein sequence, read N- to C-terminus: Regulator of G-protein signaling 1 (209 aa).

Positions 18–42 are disordered; that stretch reads FFSASPKDSKEPSHSLLDDNKQKKR. Residues 24 to 38 are compositionally biased toward basic and acidic residues; it reads KDSKEPSHSLLDDNK. The region spanning 85–200 is the RGS domain; it reads SLEKLLANQM…LKSNIYLNLL (116 aa).

Interacts with GNAI1 and GNAQ. Expressed in multiple tissues.

The protein localises to the cell membrane. It localises to the cytoplasm. The protein resides in the cytosol. Functionally, regulates G protein-coupled receptor signaling cascades, including signaling downstream of the N-formylpeptide chemoattractant receptors and leukotriene receptors. Inhibits B cell chemotaxis toward CXCL12. Inhibits signal transduction by increasing the GTPase activity of G protein alpha subunits, thereby driving them into their inactive GDP-bound form. This Rattus norvegicus (Rat) protein is Regulator of G-protein signaling 1 (Rgs1).